Reading from the N-terminus, the 392-residue chain is Major outer membrane porin (392 aa).

The signal sequence occupies residues Met1 to Ala22.

This sequence belongs to the chlamydial porin (CP) (TC 1.B.2) family. Part of a disulfide cross-linked outer membrane complex (COMC) composed of the major outer membrane porin (MOMP), the small cysteine-rich protein (OmcA) and the large cysteine-rich periplasmic protein (OmcB).

The protein localises to the cell outer membrane. Functionally, in elementary bodies (EBs, the infectious stage, which is able to survive outside the host cell) provides the structural integrity of the outer envelope through disulfide cross-links with the small cysteine-rich protein and the large cysteine-rich periplasmic protein. It has been described in publications as the Sarkosyl-insoluble COMC (Chlamydia outer membrane complex), and serves as the functional equivalent of peptidoglycan. Its function is as follows. Permits diffusion of specific solutes through the outer membrane. The sequence is that of Major outer membrane porin (ompA) from Chlamydia psittaci (Chlamydophila psittaci).